The following is a 636-amino-acid chain: Probable potassium transport system protein Kup (636 aa).

A run of 12 helical transmembrane segments spans residues Val-22–Tyr-42, Ile-64–Ile-84, Leu-115–Pro-135, Phe-150–Leu-170, Leu-182–Ile-202, Phe-220–Thr-240, Trp-261–Leu-281, Leu-293–Ile-313, Ile-351–Phe-371, Val-383–Leu-403, Pro-408–Ala-428, and Ile-433–Thr-453.

Belongs to the HAK/KUP transporter (TC 2.A.72) family.

It is found in the cell inner membrane. The enzyme catalyses K(+)(in) + H(+)(in) = K(+)(out) + H(+)(out). Functionally, transport of potassium into the cell. Likely operates as a K(+):H(+) symporter. This chain is Probable potassium transport system protein Kup, found in Pseudomonas putida (strain ATCC 47054 / DSM 6125 / CFBP 8728 / NCIMB 11950 / KT2440).